A 700-amino-acid chain; its full sequence is Polyphosphate kinase (700 aa).

Asn-45 provides a ligand contact to ATP. Mg(2+) contacts are provided by Arg-373 and Arg-403. Residues 428 to 462 (PGMKIHAKLLLITRREEQGFVRYAHIGTGNFHERT) enclose the PLD phosphodiesterase 1 domain. The active-site Phosphohistidine intermediate is His-433. Residues Tyr-466, Arg-562, and His-590 each coordinate ATP. In terms of domain architecture, PLD phosphodiesterase 2 spans 585–615 (DRFLEHPRVLVVHNDGDPQVFISSADWMERN).

This sequence belongs to the polyphosphate kinase 1 (PPK1) family. The cofactor is Mg(2+). An intermediate of this reaction is the autophosphorylated ppk in which a phosphate is covalently linked to a histidine residue through a N-P bond.

It catalyses the reaction [phosphate](n) + ATP = [phosphate](n+1) + ADP. Functionally, catalyzes the reversible transfer of the terminal phosphate of ATP to form a long-chain polyphosphate (polyP). The protein is Polyphosphate kinase of Vibrio vulnificus (strain CMCP6).